The chain runs to 483 residues: MYLSFYITDTKNKLIFQYLLGATAPSFKHLWTRVQSTCPQLLEDSSSDDYLDHSMVGRDLEVYKYFSVINKLNYWCLASTSKSKGPLDCFTFLETIDRILLEYFDKDKLSIKKIVNNYDRISLIFNCCVEAGEPNVSDMLYVNKIKEAVPERSDLSKFISSTAHNLQQAVQLPQQRQQQLQQNQISRGSNSLIENEEIVPWRTSRASKHENNELYVDLLETFHVVFEKKKSHLRLLTGSIHGIVDVRSYLNDNPLVAVKLNTMGNDIGIPSLHDCVEINDGVFSPSNITFIPPDGKFRLLEYSVDLSSQVKQSGVRMNSIGLMSLHFQNGLGKDSDEFELSLNIENFKKVSQVDDLKIDLQFNVENADPNEIAYKIKILRNTHGRFENSIIMGQGQWIFDKSTATGTVPVLRGCIEYENTGPNFTKKVDLQTVSLEYSYIGQSASGIYVEAIDIVSGLTIGKNTKLYKGAKYKTQTGNFQVRL.

An MHD domain is found at 211–482 (NNELYVDLLE…KTQTGNFQVR (272 aa)).

Belongs to the adaptor complexes medium subunit family. In terms of assembly, adaptor protein complex 3 (AP-3) is a heterotetramer composed of 2 large adaptins (APL5 and APL6), a medium adaptin (APM3) and a small adaptin (APS3).

It is found in the golgi apparatus. It localises to the cytoplasmic vesicle membrane. Part of the AP-3 complex, an adaptor-related complex which is not clathrin-associated. The complex is associated with the Golgi region as well as more peripheral structures. It facilitates the budding of vesicles from the Golgi membrane and may be directly involved in trafficking to the vacuole. Required for the transport via the ALP pathway, which directs the transport of the cargo proteins PHO8 and VAM3 to the vacuole. The polypeptide is AP-3 complex subunit mu (APM3) (Saccharomyces cerevisiae (strain ATCC 204508 / S288c) (Baker's yeast)).